Consider the following 457-residue polypeptide: uncharacterized protein (457 aa).

Residues 10 to 69 (ALLQGQTVTVPITALAAGGDGIARLTDGRVLFVAGAVPGDTVEARLVHLKKDHGFGKILQ) enclose the TRAM domain. 4 residues coordinate [4Fe-4S] cluster: cysteine 82, cysteine 88, cysteine 91, and cysteine 170. 4 residues coordinate S-adenosyl-L-methionine: glutamine 294, tyrosine 323, glutamate 344, and aspartate 387. Catalysis depends on cysteine 414, which acts as the Nucleophile.

It belongs to the class I-like SAM-binding methyltransferase superfamily. RNA M5U methyltransferase family.

This is an uncharacterized protein from Gloeobacter violaceus (strain ATCC 29082 / PCC 7421).